The following is a 336-amino-acid chain: WAT1-related protein At2g37450 (336 aa).

9 helical membrane-spanning segments follow: residues 7–27 (ALPF…DILT), 45–65 (HGVA…PVIA), 79–99 (TFAI…ALIF), 115–135 (VVGT…KGPA), 160–180 (GAVL…LQAI), 189–209 (LSLA…VALV), 227–247 (LTIT…GGVV), 255–275 (FVTA…SIIF), and 279–299 (MYLG…LVIW). 2 consecutive EamA domains span residues 63 to 126 (VIAQ…GGIM) and 169 to 298 (FSYA…YLVI).

Belongs to the drug/metabolite transporter (DMT) superfamily. Plant drug/metabolite exporter (P-DME) (TC 2.A.7.4) family.

It is found in the membrane. The protein is WAT1-related protein At2g37450 of Arabidopsis thaliana (Mouse-ear cress).